The sequence spans 301 residues: MPT51 antigen (301 aa).

An N-terminal signal peptide occupies residues 1–36 (MRGLSAVVRVLCVAALAVGVFAAAVLLAGTAGNAKA).

It belongs to the mycobacterial A85 antigen family. In terms of assembly, homodimer.

Its subcellular location is the secreted. May have a role in host tissue attachment, whereby ligands may include the serum protein fibronectin and small sugars. This is MPT51 antigen (mpt51) from Mycobacterium leprae (strain TN).